A 258-amino-acid chain; its full sequence is Regulatory protein RecX (258 aa).

It belongs to the RecX family.

It localises to the cytoplasm. Its function is as follows. Modulates RecA activity. In Streptococcus pneumoniae serotype 19F (strain G54), this protein is Regulatory protein RecX.